A 355-amino-acid chain; its full sequence is MSCLLSEEERLQKRINTRINRELQRDHKDAKKEIKLLLLGTGESGKSTFIKQMRIIHGKGYSKQDCLEYKNLVFRNILMSMHSMLQATAELKIAYIDPDAQRHVQLLMALRPETAQSLGGETCEAIRKLWQDAGVQECYQRRNEYQLSDSTKYYLDDLPRISSNDYVPTTQDVLRVRVPTTGINEYPFTINKIIFKMVDVGGQRSERRKWIHCFDHVTSVMFLVAISEYDQILVEADSRVNRMVESLHLFNTIISYPWFNKSSIILFLNKKDLLEEKVMHSHLIDYFEEYDGPKCDHVSARESIAKMFISINDMRSADIYPHFTCATDTENIKFVFDVVKNHILQQHITEVVPGL.

Residue Cys-3 is the site of S-palmitoyl cysteine attachment. The 324-residue stretch at Lys-32–Leu-355 folds into the G-alpha domain. The tract at residues Lys-35–Thr-48 is G1 motif. Residues Gly-40–Ser-47, Leu-174–Thr-180, Asp-199–Gln-203, Asn-269–Asp-272, and Ala-326 contribute to the GTP site. Positions 47 and 180 each coordinate Mg(2+). A G2 motif region spans residues Asp-172–Thr-180. The interval Phe-195 to Arg-204 is G3 motif. The G4 motif stretch occupies residues Ile-265–Asp-272. Positions Thr-324 to Thr-329 are G5 motif.

Belongs to the G-alpha family. G(q) subfamily. As to quaternary structure, g proteins are composed of 3 units; alpha, beta and gamma. The alpha chain contains the guanine nucleotide binding site.

Its function is as follows. Guanine nucleotide-binding proteins (G proteins) are involved as modulators or transducers in various transmembrane signaling systems. This is Guanine nucleotide-binding protein G(q) subunit alpha from Geodia cydonium (Sponge).